The following is a 216-amino-acid chain: 3-isopropylmalate dehydratase small subunit (216 aa).

Belongs to the LeuD family. LeuD type 1 subfamily. As to quaternary structure, heterodimer of LeuC and LeuD.

The catalysed reaction is (2R,3S)-3-isopropylmalate = (2S)-2-isopropylmalate. Its pathway is amino-acid biosynthesis; L-leucine biosynthesis; L-leucine from 3-methyl-2-oxobutanoate: step 2/4. In terms of biological role, catalyzes the isomerization between 2-isopropylmalate and 3-isopropylmalate, via the formation of 2-isopropylmaleate. In Burkholderia thailandensis (strain ATCC 700388 / DSM 13276 / CCUG 48851 / CIP 106301 / E264), this protein is 3-isopropylmalate dehydratase small subunit.